The following is a 155-amino-acid chain: Small ribosomal subunit protein uS7c (155 aa).

It belongs to the universal ribosomal protein uS7 family. In terms of assembly, part of the 30S ribosomal subunit.

Its subcellular location is the plastid. The protein resides in the chloroplast. Functionally, one of the primary rRNA binding proteins, it binds directly to 16S rRNA where it nucleates assembly of the head domain of the 30S subunit. This chain is Small ribosomal subunit protein uS7c (rps7), found in Metasequoia glyptostroboides (Dawn redwood).